The primary structure comprises 154 residues: S-protein homolog 12 (154 aa).

A signal peptide spans 1-30 (MGTNKIPKTLNGNLVLILIITIMMVTHSHG).

This sequence belongs to the plant self-incompatibility (S1) protein family.

It localises to the secreted. The chain is S-protein homolog 12 from Arabidopsis thaliana (Mouse-ear cress).